A 190-amino-acid polypeptide reads, in one-letter code: RING finger protein 227 (190 aa).

An RING-type zinc finger spans residues 18–81 (CNICFRPYNL…RRAVTCPFCR (64 aa)). Residues 108–147 (ARAEREGDPMGSPAKDSGEDGEDDDGEAESEKGAGPPSAG) are disordered. Residues 126-135 (EDGEDDDGEA) show a composition bias toward acidic residues.

The sequence is that of RING finger protein 227 from Mus musculus (Mouse).